The chain runs to 902 residues: 26S proteasome regulatory subunit rpn-1 (902 aa).

Basic and acidic residues predominate over residues 1-41 (MAQESDLSKTADKGKGKAVDDEKKHQDVDGKTPANGKKEEE). Positions 1–54 (MAQESDLSKTADKGKGKAVDDEKKHQDVDGKTPANGKKEEEQNASEELSEEDQQ) are disordered. Residues 42-52 (QNASEELSEED) show a composition bias toward acidic residues. PC repeat units follow at residues 415 to 448 (STVA…QIQA), 449 to 487 (GAYL…LIRV), 488 to 522 (ATIM…SMQV), 525 to 559 (MAAL…GSRL), 568 to 601 (ALGL…KPTA), 645 to 680 (AVLG…NIRR), 681 to 715 (AVPL…EVAI), and 716 to 750 (NAIF…DQES).

The protein belongs to the proteasome subunit S2 family.

Acts as a regulatory subunit of the 26 proteasome which is involved in the ATP-dependent degradation of ubiquitinated proteins. This Neurospora crassa (strain ATCC 24698 / 74-OR23-1A / CBS 708.71 / DSM 1257 / FGSC 987) protein is 26S proteasome regulatory subunit rpn-1 (rpn-1).